A 389-amino-acid polypeptide reads, in one-letter code: Arrestin-C (389 aa).

Belongs to the arrestin family. Retina and pineal gland.

Functionally, may play a role in an as yet undefined retina-specific signal transduction. Could bind to photoactivated-phosphorylated red/green opsins. The chain is Arrestin-C (arr3) from Aquarana catesbeiana (American bullfrog).